The chain runs to 263 residues: Phosphatidylglycerol--prolipoprotein diacylglyceryl transferase (263 aa).

A run of 3 helical transmembrane segments spans residues Leu-17–Gly-37, Leu-56–Tyr-76, and Ile-88–Ala-108. Position 139 (Arg-139) interacts with a 1,2-diacyl-sn-glycero-3-phospho-(1'-sn-glycerol). 2 consecutive transmembrane segments (helical) span residues Gln-176–Ala-196 and Ile-236–Phe-256.

The protein belongs to the Lgt family.

It is found in the cell inner membrane. The enzyme catalyses L-cysteinyl-[prolipoprotein] + a 1,2-diacyl-sn-glycero-3-phospho-(1'-sn-glycerol) = an S-1,2-diacyl-sn-glyceryl-L-cysteinyl-[prolipoprotein] + sn-glycerol 1-phosphate + H(+). The protein operates within protein modification; lipoprotein biosynthesis (diacylglyceryl transfer). Catalyzes the transfer of the diacylglyceryl group from phosphatidylglycerol to the sulfhydryl group of the N-terminal cysteine of a prolipoprotein, the first step in the formation of mature lipoproteins. In Dechloromonas aromatica (strain RCB), this protein is Phosphatidylglycerol--prolipoprotein diacylglyceryl transferase.